The primary structure comprises 230 residues: Ion-translocating oxidoreductase complex subunit E (230 aa).

6 consecutive transmembrane segments (helical) span residues 18 to 38 (ALVQ…ITNA), 39 to 59 (LGLG…VSLI), 69 to 89 (IPVF…LMNA), 93 to 113 (GLYL…IIIG), 124 to 144 (VLPA…VLVV), and 182 to 202 (SFLL…LIAL).

Belongs to the NqrDE/RnfAE family. As to quaternary structure, the complex is composed of six subunits: RnfA, RnfB, RnfC, RnfD, RnfE and RnfG.

The protein localises to the cell inner membrane. In terms of biological role, part of a membrane-bound complex that couples electron transfer with translocation of ions across the membrane. The protein is Ion-translocating oxidoreductase complex subunit E of Vibrio parahaemolyticus serotype O3:K6 (strain RIMD 2210633).